A 58-amino-acid chain; its full sequence is uncharacterized protein (58 aa).

It localises to the mitochondrion. This is an uncharacterized protein from Saccharomyces cerevisiae (strain ATCC 204508 / S288c) (Baker's yeast).